Consider the following 235-residue polypeptide: Uridylate kinase (235 aa).

9–12 is a binding site for ATP; sequence KLSG. The segment at 17 to 22 is involved in allosteric activation by GTP; it reads GDQGYG. A UMP-binding site is contributed by Gly51. Residues Gly52 and Arg56 each coordinate ATP. UMP-binding positions include Asp71 and 132 to 139; that span reads CGNPFFTT. Residues Thr159, Tyr165, and Asp168 each contribute to the ATP site.

This sequence belongs to the UMP kinase family. In terms of assembly, homohexamer.

It is found in the cytoplasm. It carries out the reaction UMP + ATP = UDP + ADP. The protein operates within pyrimidine metabolism; CTP biosynthesis via de novo pathway; UDP from UMP (UMPK route): step 1/1. Allosterically activated by GTP. Inhibited by UTP. Its function is as follows. Catalyzes the reversible phosphorylation of UMP to UDP. The sequence is that of Uridylate kinase from Synechococcus sp. (strain WH7803).